The following is a 392-amino-acid chain: Phospho-N-acetylmuramoyl-pentapeptide-transferase (392 aa).

10 consecutive transmembrane segments (helical) span residues 29–49, 76–96, 100–120, 137–157, 192–212, 225–245, 262–282, 289–309, 314–334, and 369–389; these read AVLAALTALLIGLAAGSWVIG, TMGGVLILLSIALSTLLWFDL, FVWIVLLVTLGFGAIGWVDDW, YLWQSLIGLMAALYLVFCISE, AVSYPLGVLGFVLLTYLVIVG, GLAIMPVVMVGSALGVFAYVT, SGELLIFCAAMAGAGLAFLWF, VFMGDVGALALGAALGTIAII, IVLAVMGGIFVAEALSVMLQV, and QVVVRFWIITMLLCLVGLSTL.

This sequence belongs to the glycosyltransferase 4 family. MraY subfamily. The cofactor is Mg(2+).

The protein localises to the cell inner membrane. It carries out the reaction UDP-N-acetyl-alpha-D-muramoyl-L-alanyl-gamma-D-glutamyl-meso-2,6-diaminopimeloyl-D-alanyl-D-alanine + di-trans,octa-cis-undecaprenyl phosphate = di-trans,octa-cis-undecaprenyl diphospho-N-acetyl-alpha-D-muramoyl-L-alanyl-D-glutamyl-meso-2,6-diaminopimeloyl-D-alanyl-D-alanine + UMP. It participates in cell wall biogenesis; peptidoglycan biosynthesis. Its function is as follows. Catalyzes the initial step of the lipid cycle reactions in the biosynthesis of the cell wall peptidoglycan: transfers peptidoglycan precursor phospho-MurNAc-pentapeptide from UDP-MurNAc-pentapeptide onto the lipid carrier undecaprenyl phosphate, yielding undecaprenyl-pyrophosphoryl-MurNAc-pentapeptide, known as lipid I. This Verminephrobacter eiseniae (strain EF01-2) protein is Phospho-N-acetylmuramoyl-pentapeptide-transferase.